The chain runs to 722 residues: Serine/threonine-protein kinase dkf-1 (722 aa).

2 consecutive Phorbol-ester/DAG-type zinc fingers follow at residues 98 to 148 and 186 to 236; these read PHVV…RNNC and PHTL…ASNC. Residues 279–407 form the PH domain; it reads KKLEGWMMHF…QFIKESLQPP (129 aa). The region spanning 426–685 is the Protein kinase domain; it reads VLSDKTLGSG…IEQCLDHGWL (260 aa). ATP contacts are provided by residues 432–440 and Lys455; that span reads LGSGQFGTV. The Proton acceptor role is filled by Asp551. Position 588 is a phosphothreonine (Thr588).

Belongs to the protein kinase superfamily. CAMK Ser/Thr protein kinase family. PKD subfamily. Requires Mg(2+) as cofactor. Prolonged phosphorylation at Thr-588 results in ubiquitination and degradation. In terms of tissue distribution, highly expressed in embryos and at lower levels through the four larval stages in adults. Present in a region bounded by the anterior and posterior bulbs of the pharynx and an area of the tail containing the lumbar, dorsorectal and pre-anal ganglia. Expressed in neurons.

The protein resides in the cytoplasm. The protein localises to the membrane. It carries out the reaction L-seryl-[protein] + ATP = O-phospho-L-seryl-[protein] + ADP + H(+). It catalyses the reaction L-threonyl-[protein] + ATP = O-phospho-L-threonyl-[protein] + ADP + H(+). With respect to regulation, activated by DAG and phorbol esters. Phorbol-ester/DAG-type domain 1 binds phorbol ester with high affinity and mediates accumulation at the cell periphery. Phorbol-ester/DAG-type domain 2 binds phorbol ester with low affinity but may mediate initial contact, resulting in a conformational change allowing previously occluded domain 1 to anchor the kinase. Phosphorylation on Thr-588 is then also required for activation and may also result in a further conformational change. Functionally, converts transient diacylglycerol (DAG) signals into prolonged physiological effects, independently of PKC. Role in the regulation of growth and neuromuscular control of movement. Involved in immune response to S.aureus bacterium by activating transcription factor hlh-30 downstream of phospholipase plc-1. The sequence is that of Serine/threonine-protein kinase dkf-1 (dkf-1) from Caenorhabditis elegans.